The chain runs to 207 residues: Uracil phosphoribosyltransferase (207 aa).

5-phospho-alpha-D-ribose 1-diphosphate contacts are provided by residues Arg77, Arg102, and Asp129–Ser137. Residues Ile192 and Gly197–Ala199 contribute to the uracil site. Asp198 provides a ligand contact to 5-phospho-alpha-D-ribose 1-diphosphate.

Belongs to the UPRTase family. Mg(2+) serves as cofactor.

It catalyses the reaction UMP + diphosphate = 5-phospho-alpha-D-ribose 1-diphosphate + uracil. It participates in pyrimidine metabolism; UMP biosynthesis via salvage pathway; UMP from uracil: step 1/1. With respect to regulation, allosterically activated by GTP. Functionally, catalyzes the conversion of uracil and 5-phospho-alpha-D-ribose 1-diphosphate (PRPP) to UMP and diphosphate. This is Uracil phosphoribosyltransferase from Mycobacterium marinum (strain ATCC BAA-535 / M).